Here is a 749-residue protein sequence, read N- to C-terminus: Pectate disaccharide-lyase (749 aa).

The first 26 residues, 1–26 (MKYAASGLLSVALNSLLLLGSNQRFA), serve as a signal peptide directing secretion. Ca(2+) contacts are provided by aspartate 538, aspartate 562, aspartate 563, and aspartate 566. Lysine 595 serves as the catalytic Proton acceptor.

It belongs to the polysaccharide lyase 9 family. Ca(2+) is required as a cofactor.

Its subcellular location is the secreted. The catalysed reaction is [(1-&gt;4)-alpha-D-galacturonosyl](n) = 4-(4-deoxy-alpha-D-galact-4-enuronosyl)-D-galacturonate + [(1-&gt;4)-alpha-D-galacturonosyl](n-2). Its activity is regulated as follows. Activity on pectate is nearly completely inhibited by ethyleneglycol-bis-(P-aminoethyl ether) N,N'-tetraacetic acid (EGTA), EDTA or nitrilotriacetic acid. Activity is specifically restored by the addition of Ca(2+). Exo-cleaving lyase that catalyzes the digestion of pectate. Contributes to pectate catabolism but not to bacterial virulence. In vitro can also use citrus pectin and highly methyl-esterified Link pectin as substrates. This chain is Pectate disaccharide-lyase, found in Dickeya chrysanthemi (Pectobacterium chrysanthemi).